A 626-amino-acid chain; its full sequence is Two-component response regulator ORR24 (626 aa).

The segment at 1–22 (MTVEERQGRVGGHGVSGGGGGR) is disordered. The segment covering 9 to 22 (RVGGHGVSGGGGGR) has biased composition (gly residues). The region spanning 30 to 145 (RVLAVDDDPT…QLRTIWQHVI (116 aa)) is the Response regulatory domain. Residue Asp81 is modified to 4-aspartylphosphate. Positions 151-162 (DAKNRGNDDDAG) are enriched in basic and acidic residues. Disordered regions lie at residues 151–215 (DAKN…KKPR) and 400–440 (LQPL…RTTN). Positions 191–202 (NGDDGDDSDENS) are enriched in acidic residues. A DNA-binding region (myb-like GARP) is located at residues 210–269 (TQKKPRVVWSVELHRKFVAAVNQLGIEKAVPKKILDLMNVENITRENVASHLQKYRLYLK). The span at 400–421 (LQPLESSSQQHLSRVHSSSADP) shows a compositional bias: polar residues.

This sequence belongs to the ARR family. Type-B subfamily. Two-component system major event consists of a His-to-Asp phosphorelay between a sensor histidine kinase (HK) and a response regulator (RR). In plants, the His-to-Asp phosphorelay involves an additional intermediate named Histidine-containing phosphotransfer protein (HPt). This multistep phosphorelay consists of a His-Asp-His-Asp sequential transfer of a phosphate group between first a His and an Asp of the HK protein, followed by the transfer to a conserved His of the HPt protein and finally the transfer to an Asp in the receiver domain of the RR protein.

It localises to the nucleus. Transcriptional activator that binds specific DNA sequence. Functions as a response regulator involved in His-to-Asp phosphorelay signal transduction system. Phosphorylation of the Asp residue in the receiver domain activates the ability of the protein to promote the transcription of target genes. May directly activate some type-A response regulators in response to cytokinins. The protein is Two-component response regulator ORR24 of Oryza sativa subsp. indica (Rice).